The chain runs to 72 residues: Translation initiation factor IF-1 (72 aa).

In terms of domain architecture, S1-like spans 1–72 (MSKEEAIEVE…TRGRITYRAK (72 aa)).

Belongs to the IF-1 family. As to quaternary structure, component of the 30S ribosomal translation pre-initiation complex which assembles on the 30S ribosome in the order IF-2 and IF-3, IF-1 and N-formylmethionyl-tRNA(fMet); mRNA recruitment can occur at any time during PIC assembly.

The protein resides in the cytoplasm. Functionally, one of the essential components for the initiation of protein synthesis. Stabilizes the binding of IF-2 and IF-3 on the 30S subunit to which N-formylmethionyl-tRNA(fMet) subsequently binds. Helps modulate mRNA selection, yielding the 30S pre-initiation complex (PIC). Upon addition of the 50S ribosomal subunit IF-1, IF-2 and IF-3 are released leaving the mature 70S translation initiation complex. The protein is Translation initiation factor IF-1 of Geotalea uraniireducens (strain Rf4) (Geobacter uraniireducens).